A 415-amino-acid chain; its full sequence is Tyrosine--tRNA ligase (415 aa).

The 'HIGH' region motif lies at 54 to 63 (PTGSNIHLGH). The short motif at 248 to 252 (KMSKS) is the 'KMSKS' region element. K251 contacts ATP. In terms of domain architecture, S4 RNA-binding spans 351-414 (AKAFYLFSAV…LGKKTFRRLV (64 aa)).

It belongs to the class-I aminoacyl-tRNA synthetase family. TyrS type 2 subfamily. In terms of assembly, homodimer.

The protein localises to the cytoplasm. The catalysed reaction is tRNA(Tyr) + L-tyrosine + ATP = L-tyrosyl-tRNA(Tyr) + AMP + diphosphate + H(+). Functionally, catalyzes the attachment of tyrosine to tRNA(Tyr) in a two-step reaction: tyrosine is first activated by ATP to form Tyr-AMP and then transferred to the acceptor end of tRNA(Tyr). In Synechococcus sp. (strain CC9605), this protein is Tyrosine--tRNA ligase.